Here is a 28-residue protein sequence, read N- to C-terminus: Chaperonin GroEL (28 aa).

It belongs to the chaperonin (HSP60) family. In terms of assembly, forms a cylinder of 14 subunits composed of two heptameric rings stacked back-to-back. Interacts with the co-chaperonin GroES.

The protein localises to the cytoplasm. The catalysed reaction is ATP + H2O + a folded polypeptide = ADP + phosphate + an unfolded polypeptide.. Functionally, together with its co-chaperonin GroES, plays an essential role in assisting protein folding. The GroEL-GroES system forms a nano-cage that allows encapsulation of the non-native substrate proteins and provides a physical environment optimized to promote and accelerate protein folding. In Mycolicibacterium smegmatis (Mycobacterium smegmatis), this protein is Chaperonin GroEL.